The sequence spans 450 residues: Phosphoglucosamine mutase (450 aa).

Catalysis depends on serine 101, which acts as the Phosphoserine intermediate. Residues serine 101, aspartate 242, aspartate 244, and aspartate 246 each coordinate Mg(2+). A Phosphoserine modification is found at serine 101.

Belongs to the phosphohexose mutase family. Requires Mg(2+) as cofactor. Activated by phosphorylation.

The enzyme catalyses alpha-D-glucosamine 1-phosphate = D-glucosamine 6-phosphate. Its function is as follows. Catalyzes the conversion of glucosamine-6-phosphate to glucosamine-1-phosphate. This chain is Phosphoglucosamine mutase, found in Rhodopseudomonas palustris (strain HaA2).